The following is a 390-amino-acid chain: GTPase Obg (390 aa).

The 159-residue stretch at 1 to 159 folds into the Obg domain; it reads MKFVDEAVVK…REIRLELLLL (159 aa). An OBG-type G domain is found at 160–333; it reads ADVGMLGLPN…LCYKLADFME (174 aa). Residues 166-173, 191-195, 213-216, 283-286, and 314-316 contribute to the GTP site; these read GLPNAGKS, FTTLI, DIPG, NKVD, and SAI. S173 and T193 together coordinate Mg(2+). A compositionally biased stretch (acidic residues) spans 367–382; it reads TEDDDDWDDWDDEEDD. Positions 367–390 are disordered; it reads TEDDDDWDDWDDEEDDGHVVYVRD.

The protein belongs to the TRAFAC class OBG-HflX-like GTPase superfamily. OBG GTPase family. In terms of assembly, monomer. It depends on Mg(2+) as a cofactor.

The protein localises to the cytoplasm. Its function is as follows. An essential GTPase which binds GTP, GDP and possibly (p)ppGpp with moderate affinity, with high nucleotide exchange rates and a fairly low GTP hydrolysis rate. Plays a role in control of the cell cycle, stress response, ribosome biogenesis and in those bacteria that undergo differentiation, in morphogenesis control. The chain is GTPase Obg from Vibrio parahaemolyticus serotype O3:K6 (strain RIMD 2210633).